Consider the following 203-residue polypeptide: Enterotoxin-like toxin X (203 aa).

The tract at residues 164 to 180 (YTLESHKELQKNRENVE) is sialic acid-binding motif.

This sequence belongs to the staphylococcal/streptococcal toxin family.

The protein localises to the secreted. Functionally, plays a role in the inhibition of the host innate immune system. Inhibits phagocytosis and killing by human neutrophils by interacting with multiple neutrophil surface glycoproteins in a sialic acid-dependent manner. This chain is Enterotoxin-like toxin X, found in Staphylococcus aureus.